The chain runs to 467 residues: Na(+)-translocating NADH-quinone reductase subunit A (467 aa).

This sequence belongs to the NqrA family. Composed of six subunits; NqrA, NqrB, NqrC, NqrD, NqrE and NqrF.

The catalysed reaction is a ubiquinone + n Na(+)(in) + NADH + H(+) = a ubiquinol + n Na(+)(out) + NAD(+). In terms of biological role, NQR complex catalyzes the reduction of ubiquinone-1 to ubiquinol by two successive reactions, coupled with the transport of Na(+) ions from the cytoplasm to the periplasm. NqrA to NqrE are probably involved in the second step, the conversion of ubisemiquinone to ubiquinol. This Chlamydia pneumoniae (Chlamydophila pneumoniae) protein is Na(+)-translocating NADH-quinone reductase subunit A.